Consider the following 276-residue polypeptide: Ferrous iron permease EfeU (276 aa).

A topological domain (periplasmic) is located at residue M1. A helical transmembrane segment spans residues F2–I22. Topologically, residues A23–W34 are cytoplasmic. A helical membrane pass occupies residues I35 to F55. At I56–E69 the chain is on the periplasmic side. Residues L70–M90 form a helical membrane-spanning segment. Over R91 to A118 the chain is Cytoplasmic. A helical membrane pass occupies residues L119–L139. Topologically, residues A140–G147 are periplasmic. Residues I148–L168 traverse the membrane as a helical segment. At Y169–A179 the chain is on the cytoplasmic side. The helical transmembrane segment at F180–I200 threads the bilayer. Residues R201–S244 are Periplasmic-facing. Residues V245–P265 form a helical membrane-spanning segment. Over P266–V276 the chain is Cytoplasmic.

The protein belongs to the oxidase-dependent Fe transporter (OFeT) (TC 9.A.10.1) family. As to quaternary structure, part of a ferrous iron transporter composed of EfeU, EfeO and EfeB.

It localises to the cell inner membrane. Its function is as follows. Uptake of Fe(2+) ions across the membrane. The polypeptide is Ferrous iron permease EfeU (efeU) (Escherichia coli O6:K15:H31 (strain 536 / UPEC)).